The following is a 920-amino-acid chain: Puromycin-sensitive aminopeptidase (920 aa).

Substrate-binding positions include Glu-181 and 317–321 (GAMEN). His-353 serves as a coordination point for Zn(2+). Glu-354 functions as the Proton acceptor in the catalytic mechanism. His-357 and Glu-376 together coordinate Zn(2+). Tyr-465 carries the post-translational modification 3'-nitrotyrosine. Positions 727-731 (RRRFK) match the Nuclear localization signal motif.

Belongs to the peptidase M1 family. As to quaternary structure, monomer. Zn(2+) is required as a cofactor. As to expression, widely expressed. Highest expression in brain, particularly the striatum and hippocampus. Expressed in Sertoli cells.

The protein localises to the cytoplasm. Its subcellular location is the cytosol. It localises to the nucleus. The enzyme catalyses Release of an N-terminal amino acid, preferentially alanine, from a wide range of peptides, amides and arylamides.. Strongly inhibited by bestatin, leuhistin, actinonin, amastatin, 1,10-phenanthroline, DFP, PCMBS, Zn(2+), Cd(2+), Co(2+), Cu(2+), Hg(2+), EDTA and puromycin. Not inhibited by PMSF, and only slightly inhibited by leupeptin and aprotinin. Activity is increased by Mg(2+) and Ca(2+). Its function is as follows. Aminopeptidase with broad substrate specificity for several peptides. Involved in proteolytic events essential for cell growth and viability. May act as regulator of neuropeptide activity. Plays a role in the antigen-processing pathway for MHC class I molecules. Involved in the N-terminal trimming of cytotoxic T-cell epitope precursors. Digests the poly-Q peptides found in many cellular proteins. This Mus musculus (Mouse) protein is Puromycin-sensitive aminopeptidase (Npepps).